The sequence spans 154 residues: Cysteine-rich DPF motif domain-containing protein 1 (154 aa).

The protein belongs to the CDPF1 family.

The protein is Cysteine-rich DPF motif domain-containing protein 1 of Drosophila melanogaster (Fruit fly).